The sequence spans 31 residues: Cytochrome b6-f complex subunit 6 (31 aa).

Residues 3–23 (TLTSYFGFLLVALTITLVLFI) form a helical membrane-spanning segment.

This sequence belongs to the PetL family. The 4 large subunits of the cytochrome b6-f complex are cytochrome b6, subunit IV (17 kDa polypeptide, PetD), cytochrome f and the Rieske protein, while the 4 small subunits are PetG, PetL, PetM and PetN. The complex functions as a dimer.

The protein localises to the plastid. Its subcellular location is the chloroplast thylakoid membrane. Its function is as follows. Component of the cytochrome b6-f complex, which mediates electron transfer between photosystem II (PSII) and photosystem I (PSI), cyclic electron flow around PSI, and state transitions. PetL is important for photoautotrophic growth as well as for electron transfer efficiency and stability of the cytochrome b6-f complex. The polypeptide is Cytochrome b6-f complex subunit 6 (Populus alba (White poplar)).